A 248-amino-acid chain; its full sequence is Ubiquinone/menaquinone biosynthesis C-methyltransferase UbiE (248 aa).

Positions 68 and 92 each coordinate S-adenosyl-L-methionine.

Belongs to the class I-like SAM-binding methyltransferase superfamily. MenG/UbiE family.

The enzyme catalyses a 2-demethylmenaquinol + S-adenosyl-L-methionine = a menaquinol + S-adenosyl-L-homocysteine + H(+). It catalyses the reaction a 2-methoxy-6-(all-trans-polyprenyl)benzene-1,4-diol + S-adenosyl-L-methionine = a 5-methoxy-2-methyl-3-(all-trans-polyprenyl)benzene-1,4-diol + S-adenosyl-L-homocysteine + H(+). The protein operates within quinol/quinone metabolism; menaquinone biosynthesis; menaquinol from 1,4-dihydroxy-2-naphthoate: step 2/2. It functions in the pathway cofactor biosynthesis; ubiquinone biosynthesis. In terms of biological role, methyltransferase required for the conversion of demethylmenaquinol (DMKH2) to menaquinol (MKH2) and the conversion of 2-polyprenyl-6-methoxy-1,4-benzoquinol (DDMQH2) to 2-polyprenyl-3-methyl-6-methoxy-1,4-benzoquinol (DMQH2). The chain is Ubiquinone/menaquinone biosynthesis C-methyltransferase UbiE from Rickettsia rickettsii (strain Iowa).